A 458-amino-acid polypeptide reads, in one-letter code: tRNA modification GTPase MnmE (458 aa).

Residues R22, E84, and R123 each contribute to the (6S)-5-formyl-5,6,7,8-tetrahydrofolate site. Residues 220 to 379 (GIATAIIGRP…LEKAIADLFF (160 aa)) enclose the TrmE-type G domain. N230 lines the K(+) pocket. Residues 230-235 (NVGKSS), 249-255 (TDIAGTT), and 274-277 (DTAG) each bind GTP. S234 contributes to the Mg(2+) binding site. The K(+) site is built by T249, I251, and T254. T255 provides a ligand contact to Mg(2+). Position 458 (K458) interacts with (6S)-5-formyl-5,6,7,8-tetrahydrofolate.

It belongs to the TRAFAC class TrmE-Era-EngA-EngB-Septin-like GTPase superfamily. TrmE GTPase family. In terms of assembly, homodimer. Heterotetramer of two MnmE and two MnmG subunits. K(+) is required as a cofactor.

It is found in the cytoplasm. In terms of biological role, exhibits a very high intrinsic GTPase hydrolysis rate. Involved in the addition of a carboxymethylaminomethyl (cmnm) group at the wobble position (U34) of certain tRNAs, forming tRNA-cmnm(5)s(2)U34. This Bacillus cytotoxicus (strain DSM 22905 / CIP 110041 / 391-98 / NVH 391-98) protein is tRNA modification GTPase MnmE.